We begin with the raw amino-acid sequence, 123 residues long: Glucose starvation-inducible protein B (123 aa).

Composition is skewed to basic and acidic residues over residues 1–29 (MADN…KEFY) and 41–109 (SKNH…KEFY). The tract at residues 1–123 (MADNNKMSRE…SKGGNARNND (123 aa)) is disordered. 5 repeat units span residues 13 to 32 (GRKG…YQEI), 33 to 52 (GQKG…YQEI), 53 to 72 (GEKG…YQEI), 73 to 92 (GEKG…YQEI), and 93 to 112 (GRKG…YQEI). The tract at residues 13-120 (GRKGGETTSK…EIGSKGGNAR (108 aa)) is 5 X 20 AA approximate tandem repeats.

Its function is as follows. Involved in an adaptive response to nutrient deprivation other than sporulation. In Bacillus subtilis (strain 168), this protein is Glucose starvation-inducible protein B (gsiB).